The primary structure comprises 245 residues: Probable phosphatase KPK_3500 (245 aa).

9 residues coordinate Zn(2+): His-7, His-9, His-15, His-40, Glu-73, His-101, His-131, Asp-192, and His-194.

The protein belongs to the PHP family. As to quaternary structure, homotrimer. The cofactor is Zn(2+).

This chain is Probable phosphatase KPK_3500, found in Klebsiella pneumoniae (strain 342).